The primary structure comprises 280 residues: Urease accessory protein UreD 1 (280 aa).

It belongs to the UreD family. In terms of assembly, ureD, UreF and UreG form a complex that acts as a GTP-hydrolysis-dependent molecular chaperone, activating the urease apoprotein by helping to assemble the nickel containing metallocenter of UreC. The UreE protein probably delivers the nickel.

Its subcellular location is the cytoplasm. In terms of biological role, required for maturation of urease via the functional incorporation of the urease nickel metallocenter. This Brucella canis (strain ATCC 23365 / NCTC 10854 / RM-666) protein is Urease accessory protein UreD 1.